The primary structure comprises 454 residues: UPF0210 protein Cphy_2797 (454 aa).

It belongs to the UPF0210 family. Homodimer.

The protein is UPF0210 protein Cphy_2797 of Lachnoclostridium phytofermentans (strain ATCC 700394 / DSM 18823 / ISDg) (Clostridium phytofermentans).